A 272-amino-acid chain; its full sequence is Shikimate dehydrogenase (NADP(+)) (272 aa).

Shikimate contacts are provided by residues 20-22 (TMS) and Thr67. The active-site Proton acceptor is the Lys71. Glu83 provides a ligand contact to NADP(+). Shikimate-binding residues include Asn92 and Asp107. Residues 129–133 (GAGGA), 153–158 (NRTKSK), and Leu216 contribute to the NADP(+) site. Position 218 (Tyr218) interacts with shikimate. NADP(+) is bound at residue Gly239.

Belongs to the shikimate dehydrogenase family. As to quaternary structure, homodimer.

The enzyme catalyses shikimate + NADP(+) = 3-dehydroshikimate + NADPH + H(+). Its pathway is metabolic intermediate biosynthesis; chorismate biosynthesis; chorismate from D-erythrose 4-phosphate and phosphoenolpyruvate: step 4/7. Involved in the biosynthesis of the chorismate, which leads to the biosynthesis of aromatic amino acids. Catalyzes the reversible NADPH linked reduction of 3-dehydroshikimate (DHSA) to yield shikimate (SA). This chain is Shikimate dehydrogenase (NADP(+)), found in Maridesulfovibrio salexigens (strain ATCC 14822 / DSM 2638 / NCIMB 8403 / VKM B-1763) (Desulfovibrio salexigens).